Reading from the N-terminus, the 28-residue chain is N-acetyl-D-galactosamine-binding lectin subunit A (28 aa).

Belongs to the ribosome-inactivating protein family. As to quaternary structure, disulfide-linked heterodimer of A and B chains.

It catalyses the reaction Endohydrolysis of the N-glycosidic bond at one specific adenosine on the 28S rRNA.. In terms of biological role, gal / GalNAc-specific lectin. Agglutinates both native and trypsin-treated rabbit erythrocytes but not human erythrocytes irrespective of blood group type. This Iris hollandica (Dutch iris) protein is N-acetyl-D-galactosamine-binding lectin subunit A.